A 124-amino-acid chain; its full sequence is Ribonuclease P protein component (124 aa).

This sequence belongs to the RnpA family. As to quaternary structure, consists of a catalytic RNA component (M1 or rnpB) and a protein subunit.

The enzyme catalyses Endonucleolytic cleavage of RNA, removing 5'-extranucleotides from tRNA precursor.. In terms of biological role, RNaseP catalyzes the removal of the 5'-leader sequence from pre-tRNA to produce the mature 5'-terminus. It can also cleave other RNA substrates such as 4.5S RNA. The protein component plays an auxiliary but essential role in vivo by binding to the 5'-leader sequence and broadening the substrate specificity of the ribozyme. This chain is Ribonuclease P protein component, found in Synechocystis sp. (strain ATCC 27184 / PCC 6803 / Kazusa).